A 228-amino-acid polypeptide reads, in one-letter code: Cytochrome c oxidase subunit 2 (228 aa).

The Mitochondrial intermembrane portion of the chain corresponds to 1-26 (MTTWANMNLQDSASPIMEQLIYFHDH). A helical membrane pass occupies residues 27–48 (ALMIIIMILMVVSYMMIAMVFN). The Mitochondrial matrix portion of the chain corresponds to 49 to 62 (KYINRFLLEGQMIE). A helical membrane pass occupies residues 63–82 (LAWTIAPAVILIFIAVPSLR). Residues 83–228 (LLYLMDEINT…FINWILKMNM (146 aa)) are Mitochondrial intermembrane-facing. Cu cation-binding residues include histidine 161, cysteine 196, glutamate 198, cysteine 200, histidine 204, and methionine 207. Glutamate 198 is a Mg(2+) binding site.

It belongs to the cytochrome c oxidase subunit 2 family. As to quaternary structure, component of the cytochrome c oxidase (complex IV, CIV), a multisubunit enzyme composed of a catalytic core of 3 subunits and several supernumerary subunits. The complex exists as a monomer or a dimer and forms supercomplexes (SCs) in the inner mitochondrial membrane with ubiquinol-cytochrome c oxidoreductase (cytochrome b-c1 complex, complex III, CIII). Cu cation serves as cofactor.

It is found in the mitochondrion inner membrane. It carries out the reaction 4 Fe(II)-[cytochrome c] + O2 + 8 H(+)(in) = 4 Fe(III)-[cytochrome c] + 2 H2O + 4 H(+)(out). Component of the cytochrome c oxidase, the last enzyme in the mitochondrial electron transport chain which drives oxidative phosphorylation. The respiratory chain contains 3 multisubunit complexes succinate dehydrogenase (complex II, CII), ubiquinol-cytochrome c oxidoreductase (cytochrome b-c1 complex, complex III, CIII) and cytochrome c oxidase (complex IV, CIV), that cooperate to transfer electrons derived from NADH and succinate to molecular oxygen, creating an electrochemical gradient over the inner membrane that drives transmembrane transport and the ATP synthase. Cytochrome c oxidase is the component of the respiratory chain that catalyzes the reduction of oxygen to water. Electrons originating from reduced cytochrome c in the intermembrane space (IMS) are transferred via the dinuclear copper A center (CU(A)) of subunit 2 and heme A of subunit 1 to the active site in subunit 1, a binuclear center (BNC) formed by heme A3 and copper B (CU(B)). The BNC reduces molecular oxygen to 2 water molecules using 4 electrons from cytochrome c in the IMS and 4 protons from the mitochondrial matrix. The protein is Cytochrome c oxidase subunit 2 (COII) of Periplaneta americana (American cockroach).